The primary structure comprises 583 residues: Penicillin-binding protein activator LpoA (583 aa).

Positions 1 to 24 (MATILKQKLKTFFVPTAITLLLSA) are cleaved as a signal peptide. Residue C25 is the site of N-palmitoyl cysteine attachment. A lipid anchor (S-diacylglycerol cysteine) is attached at C25.

Belongs to the LpoA family. Interacts with PBP1a.

It is found in the cell outer membrane. Functionally, regulator of peptidoglycan synthesis that is essential for the function of penicillin-binding protein 1A (PBP1a). This chain is Penicillin-binding protein activator LpoA, found in Haemophilus ducreyi (strain 35000HP / ATCC 700724).